Reading from the N-terminus, the 322-residue chain is N-acetyl-gamma-glutamyl-phosphate reductase (322 aa).

Cysteine 132 is an active-site residue.

The protein belongs to the NAGSA dehydrogenase family. Type 1 subfamily.

It localises to the cytoplasm. It catalyses the reaction N-acetyl-L-glutamate 5-semialdehyde + phosphate + NADP(+) = N-acetyl-L-glutamyl 5-phosphate + NADPH + H(+). The protein operates within amino-acid biosynthesis; L-arginine biosynthesis; N(2)-acetyl-L-ornithine from L-glutamate: step 3/4. Its function is as follows. Catalyzes the NADPH-dependent reduction of N-acetyl-5-glutamyl phosphate to yield N-acetyl-L-glutamate 5-semialdehyde. The sequence is that of N-acetyl-gamma-glutamyl-phosphate reductase from Bacteroides fragilis (strain ATCC 25285 / DSM 2151 / CCUG 4856 / JCM 11019 / LMG 10263 / NCTC 9343 / Onslow / VPI 2553 / EN-2).